A 398-amino-acid chain; its full sequence is 1-deoxy-D-xylulose 5-phosphate reductoisomerase (398 aa).

Residues T10, G11, S12, I13, K37, N38, and N124 each coordinate NADPH. K125 provides a ligand contact to 1-deoxy-D-xylulose 5-phosphate. E126 lines the NADPH pocket. D150 contacts Mn(2+). 1-deoxy-D-xylulose 5-phosphate contacts are provided by S151, E152, S186, and H209. E152 lines the Mn(2+) pocket. G215 is an NADPH binding site. The 1-deoxy-D-xylulose 5-phosphate site is built by S222, N227, K228, and E231. E231 contributes to the Mn(2+) binding site.

Belongs to the DXR family. In terms of assembly, homodimer. Requires Mg(2+) as cofactor. Mn(2+) serves as cofactor.

It catalyses the reaction 2-C-methyl-D-erythritol 4-phosphate + NADP(+) = 1-deoxy-D-xylulose 5-phosphate + NADPH + H(+). The protein operates within isoprenoid biosynthesis; isopentenyl diphosphate biosynthesis via DXP pathway; isopentenyl diphosphate from 1-deoxy-D-xylulose 5-phosphate: step 1/6. In terms of biological role, catalyzes the NADPH-dependent rearrangement and reduction of 1-deoxy-D-xylulose-5-phosphate (DXP) to 2-C-methyl-D-erythritol 4-phosphate (MEP). The chain is 1-deoxy-D-xylulose 5-phosphate reductoisomerase from Buchnera aphidicola subsp. Schizaphis graminum (strain Sg).